Consider the following 142-residue polypeptide: MLMPKRVKYRKQHRGRMKGKAKGGSLVAFGDYGLKALEAHWITAQQIEACRIAITRTLKKSGKLWIRIFPDKSYTKHPAESKLGKGKGNVEGWVAVVKPGRVMFEIGGVSEELAREALEYAATKLPIRTKIVKRHEIGGEAV.

Belongs to the universal ribosomal protein uL16 family. Part of the 50S ribosomal subunit.

Binds 23S rRNA and is also seen to make contacts with the A and possibly P site tRNAs. The chain is Large ribosomal subunit protein uL16 from Thermosipho melanesiensis (strain DSM 12029 / CIP 104789 / BI429).